Reading from the N-terminus, the 953-residue chain is Mannosylglycoprotein endo-beta-mannosidase (953 aa).

Glu461 acts as the Proton donor in catalysis. Glu553 acts as the Nucleophile in catalysis.

It belongs to the glycosyl hydrolase 2 family. Heterotrimer of 31 kDa, 28 kDa and 42 kDa subunits. In terms of processing, the mature enzyme is proteotically cleaved into 3 subunits of 31 kDa, 28 kDa and 42 kDa. Ubiquitously expressed.

It carries out the reaction Hydrolysis of the alpha-D-mannosyl-(1-&gt;6)-beta-D-mannosyl-(1-&gt;4)-N-acetyl-beta-D-glucosaminyl-(1-&gt;4)-N-acetyl-beta-D-glucosaminyl sequence of glycoprotein to alpha-D-mannosyl-(1-&gt;6)-D-mannose and N-acetyl-beta-D-glucosaminyl-(1-&gt;4)-N-acetyl-beta-D-glucosaminyl sequences.. Functionally, glycosidase that specifically hydrolyzes the Man-beta-1,4-GlcNAc linkage in the trimannosyl core structure of N-glycans. Does not hydrolyzes pyridylamino derivatives sugar chains containing Man-alpha-1,3-Man-beta or Xylose-beta-1,2-Man-beta. The polypeptide is Mannosylglycoprotein endo-beta-mannosidase (EBM) (Lilium longiflorum (Trumpet lily)).